The sequence spans 285 residues: Type II restriction enzyme Cfr10I (285 aa).

Mg(2+) is bound by residues Asp-134 and Glu-204.

As to quaternary structure, homodimer. Mg(2+) serves as cofactor.

The catalysed reaction is Endonucleolytic cleavage of DNA to give specific double-stranded fragments with terminal 5'-phosphates.. An F and P subtype restriction enzyme that recognizes the double-stranded sequence 5'-RCCGGY-3' and cleaves after R-1. The polypeptide is Type II restriction enzyme Cfr10I (cfr10IR) (Citrobacter freundii).